The chain runs to 145 residues: MARMHTRKRGRSGSKKVYGVQPSWIQYSKDEVINTIVNLKKSGVPPSVIGIKLRDQYGIPTVKAVLGMKLGKVLSEKGLKDDVPEDLGNLIKRYNNVAKHVELNPKDQANKRGRDLIMAKMLRLVKYYKRTGVLDEKWNLSKVLR.

It belongs to the universal ribosomal protein uS15 family. As to quaternary structure, part of the 30S ribosomal subunit.

This chain is Small ribosomal subunit protein uS15, found in Thermoplasma acidophilum (strain ATCC 25905 / DSM 1728 / JCM 9062 / NBRC 15155 / AMRC-C165).